The following is a 343-amino-acid chain: NADH dehydrogenase [ubiquinone] 1 alpha subcomplex subunit 10, mitochondrial (343 aa).

The transit peptide at 1-23 (MALRLLRLVPPRVGGIHTSVQFK) directs the protein to the mitochondrion. Lys110 carries the post-translational modification N6-acetyllysine; alternate. Lys110 carries the post-translational modification N6-succinyllysine; alternate. Position 238 is a phosphoserine; by PINK1 (Ser238).

It belongs to the complex I NDUFA10 subunit family. In terms of assembly, complex I is composed of 45 different subunits. This a component of the hydrophobic protein fraction. FAD serves as cofactor. Phosphorylation at Ser-238 by PINK1 is required for the binding and/or reduction of the complex I substrate ubiquinone.

The protein resides in the mitochondrion matrix. Its function is as follows. Accessory subunit of the mitochondrial membrane respiratory chain NADH dehydrogenase (Complex I), that is believed not to be involved in catalysis. Complex I functions in the transfer of electrons from NADH to the respiratory chain. The immediate electron acceptor for the enzyme is believed to be ubiquinone. This is NADH dehydrogenase [ubiquinone] 1 alpha subcomplex subunit 10, mitochondrial (NDUFA10) from Bos taurus (Bovine).